Consider the following 147-residue polypeptide: MAMGMFDKILGFIGFDETEEQQVDREREAVEKTETLQQIKRKNAQVVSIHSGRQLRVVVCDPASFDEAQNIADNLKNRRAVVVNLEKAGAEQARRIVDFISGATAALNGDMQKVGQNIFLFVPSNIDIANDTARETKEKSIFAWAKS.

The protein belongs to the SepF family. In terms of assembly, homodimer. Interacts with FtsZ.

Its subcellular location is the cytoplasm. Cell division protein that is part of the divisome complex and is recruited early to the Z-ring. Probably stimulates Z-ring formation, perhaps through the cross-linking of FtsZ protofilaments. Its function overlaps with FtsA. The polypeptide is Cell division protein SepF 1 (Desulforamulus reducens (strain ATCC BAA-1160 / DSM 100696 / MI-1) (Desulfotomaculum reducens)).